The primary structure comprises 309 residues: Protease HtpX homolog (309 aa).

The next 2 helical transmembrane spans lie at 15–35 (NAVL…VDVI) and 54–74 (IFPT…VVCI). Residue H165 coordinates Zn(2+). E166 is an active-site residue. H169 is a binding site for Zn(2+). The next 2 membrane-spanning stretches (helical) occupy residues 181–201 (VGIL…FFMG) and 213–233 (MILL…QMYL). E238 is a binding site for Zn(2+).

Belongs to the peptidase M48B family. Requires Zn(2+) as cofactor.

It is found in the cell inner membrane. The polypeptide is Protease HtpX homolog (Helicobacter acinonychis (strain Sheeba)).